Consider the following 464-residue polypeptide: Galactose-proton symporter (464 aa).

The Cytoplasmic portion of the chain corresponds to 1-15 (MPDAKKQGRSNKAMT). The chain crosses the membrane as a helical span at residues 16-36 (FFVCFLAALAGLLFGLDIGVI). Residues 37 to 56 (AGALPFIADEFQITSHTQEW) lie on the Periplasmic side of the membrane. Residues 57-77 (VVSSMMFGAAVGAVGSGWLSF) form a helical membrane-spanning segment. Topologically, residues 78–84 (KLGRKKS) are cytoplasmic. Residues 85-105 (LMIGAILFVAGSLFSAAAPNV) traverse the membrane as a helical segment. Over 106 to 112 (EVLILSR) the chain is Periplasmic. A helical membrane pass occupies residues 113-133 (VLLGLAVGVASYTAPLYLSEI). Over 134–139 (APEKIR) the chain is Cytoplasmic. Residues 140–160 (GSMISMYQLMITIGILGAYLS) traverse the membrane as a helical segment. Residues 161–171 (DTAFSYTGAWR) lie on the Periplasmic side of the membrane. A helical membrane pass occupies residues 172–192 (WMLGVIIIPAILLLIGVFFLP). At 193 to 250 (DSPRWFAAKRRFVDAERVLLRLRDTSAEAKRELDEIRESLQVKQSGWALFKENSNFRR) the chain is on the cytoplasmic side. A helical transmembrane segment spans residues 251-271 (AVFLGVLLQVMQQFTGMNVIM). At 272 to 290 (YYAPKIFELAGYTNTTEQM) the chain is on the periplasmic side. A helical membrane pass occupies residues 291–311 (WGTVIVGLTNVLATFIAIGLV). Residues 312-321 (DRWGRKPTLT) are Cytoplasmic-facing. The chain crosses the membrane as a helical span at residues 322-342 (LGFLVMAAGMGVLGTMMHIGI). Over 343 to 351 (HSPSAQYFA) the chain is Periplasmic. The helical transmembrane segment at 352 to 372 (IAMLLMFIVGFAMSAGPLIWV) threads the bilayer. Residues 373–394 (LCSEIQPLKGRDFGITCSTATN) lie on the Cytoplasmic side of the membrane. The chain crosses the membrane as a helical span at residues 395-415 (WIANMIVGATFLTMLNTLGNA). Residue N416 is a topological domain, periplasmic. The helical transmembrane segment at 417–437 (TFWVYAALNVLFILLTLWLVP) threads the bilayer. Over 438–464 (ETKHVSLEHIERNLMKGRKLREIGAHD) the chain is Cytoplasmic.

This sequence belongs to the major facilitator superfamily. Sugar transporter (TC 2.A.1.1) family.

The protein localises to the cell inner membrane. Its function is as follows. Uptake of galactose across the boundary membrane with the concomitant transport of protons into the cell (symport system). This chain is Galactose-proton symporter (galP), found in Escherichia coli O6:H1 (strain CFT073 / ATCC 700928 / UPEC).